Here is a 720-residue protein sequence, read N- to C-terminus: Inactive serine protease PAMR1 (720 aa).

Residues 1 to 21 form the signal peptide; the sequence is MELGWWPQLGLAFLQLLLISS. 8 disulfide bridges follow: C128–C150, C177–C199, C239–C250, C244–C260, C262–C271, C280–C329, C315–C342, and C414–C442. In terms of domain architecture, CUB spans 128-236; sequence CGQVLRVPKG…DGFHAIFEEI (109 aa). Residues 235–272 form the EGF-like domain; that stretch reads EITACSSSPCFHDGTCLLDSTGSYKCACLAGYTGKHCE. Sushi domains lie at 278–344 and 387–444; these read RNCS…ICIK and APTK…SCIP. The 276-residue stretch at 445–720 folds into the Peptidase S1 domain; sequence ICGKTENVSA…FKDWIERNMK (276 aa). N451 is a glycosylation site (N-linked (GlcNAc...) asparagine). Disulfide bonds link C489–C505, C630–C649, and C661–C697.

Belongs to the peptidase S1 family.

It localises to the secreted. Functionally, may play a role in regeneration of skeletal muscle. In Bos taurus (Bovine), this protein is Inactive serine protease PAMR1 (PAMR1).